Here is a 194-residue protein sequence, read N- to C-terminus: ATP synthase subunit delta (194 aa).

It belongs to the ATPase delta chain family. As to quaternary structure, F-type ATPases have 2 components, F(1) - the catalytic core - and F(0) - the membrane proton channel. F(1) has five subunits: alpha(3), beta(3), gamma(1), delta(1), epsilon(1). F(0) has three main subunits: a(1), b(2) and c(10-14). The alpha and beta chains form an alternating ring which encloses part of the gamma chain. F(1) is attached to F(0) by a central stalk formed by the gamma and epsilon chains, while a peripheral stalk is formed by the delta and b chains.

It localises to the cell inner membrane. Its function is as follows. F(1)F(0) ATP synthase produces ATP from ADP in the presence of a proton or sodium gradient. F-type ATPases consist of two structural domains, F(1) containing the extramembraneous catalytic core and F(0) containing the membrane proton channel, linked together by a central stalk and a peripheral stalk. During catalysis, ATP synthesis in the catalytic domain of F(1) is coupled via a rotary mechanism of the central stalk subunits to proton translocation. Functionally, this protein is part of the stalk that links CF(0) to CF(1). It either transmits conformational changes from CF(0) to CF(1) or is implicated in proton conduction. This chain is ATP synthase subunit delta, found in Bartonella bacilliformis (strain ATCC 35685 / KC583 / Herrer 020/F12,63).